The sequence spans 264 residues: uncharacterized protein (264 aa).

The next 3 membrane-spanning stretches (helical) occupy residues 48 to 68 (LTITLLYLHPVSFSAILLLVF), 112 to 132 (ITPSAISSGLLVSLVLIFLLA), and 142 to 162 (LPIAIWIGLISLHPKLRSYLI). Residue serine 260 is modified to Phosphoserine.

Its subcellular location is the membrane. This is an uncharacterized protein from Schizosaccharomyces pombe (strain 972 / ATCC 24843) (Fission yeast).